Reading from the N-terminus, the 101-residue chain is Protein snet-1 (101 aa).

The first 20 residues, 1–20, serve as a signal peptide directing secretion; the sequence is MARFTPLLMILLALVPLYYS.

May be degraded by the nep-2 peptidase. In terms of tissue distribution, expressed in coelomocytes, the ASK sensory neurons and interneurons AIB, AIM and PVQ.

It localises to the secreted. The protein resides in the perikaryon. Negatively regulates chemotaxis and olfactory plasticity which is the change from positive chemotaxis to dispersal after prolonged exposure to an odorant. May be down-regulated in response to pheromone exposure, resulting in promotion of olfactory plasticity. This chain is Protein snet-1, found in Caenorhabditis elegans.